A 375-amino-acid chain; its full sequence is Succinyl-diaminopimelate desuccinylase (375 aa).

A Zn(2+)-binding site is contributed by His66. Asp68 is a catalytic residue. Asp99 contacts Zn(2+). The Proton acceptor role is filled by Glu133. Zn(2+)-binding residues include Glu134, Glu162, and His348.

This sequence belongs to the peptidase M20A family. DapE subfamily. Homodimer. The cofactor is Zn(2+). Requires Co(2+) as cofactor.

The enzyme catalyses N-succinyl-(2S,6S)-2,6-diaminopimelate + H2O = (2S,6S)-2,6-diaminopimelate + succinate. The protein operates within amino-acid biosynthesis; L-lysine biosynthesis via DAP pathway; LL-2,6-diaminopimelate from (S)-tetrahydrodipicolinate (succinylase route): step 3/3. Catalyzes the hydrolysis of N-succinyl-L,L-diaminopimelic acid (SDAP), forming succinate and LL-2,6-diaminopimelate (DAP), an intermediate involved in the bacterial biosynthesis of lysine and meso-diaminopimelic acid, an essential component of bacterial cell walls. The polypeptide is Succinyl-diaminopimelate desuccinylase (Escherichia coli O7:K1 (strain IAI39 / ExPEC)).